The following is a 319-amino-acid chain: Beta-ketoacyl-[acyl-carrier-protein] synthase III (319 aa).

Catalysis depends on residues Cys-115 and His-246. The tract at residues 247 to 251 is ACP-binding; that stretch reads QANLR. Residue Asn-276 is part of the active site.

This sequence belongs to the thiolase-like superfamily. FabH family. As to quaternary structure, homodimer.

The protein localises to the cytoplasm. The enzyme catalyses malonyl-[ACP] + acetyl-CoA + H(+) = 3-oxobutanoyl-[ACP] + CO2 + CoA. It participates in lipid metabolism; fatty acid biosynthesis. Functionally, catalyzes the condensation reaction of fatty acid synthesis by the addition to an acyl acceptor of two carbons from malonyl-ACP. Catalyzes the first condensation reaction which initiates fatty acid synthesis and may therefore play a role in governing the total rate of fatty acid production. Possesses both acetoacetyl-ACP synthase and acetyl transacylase activities. Its substrate specificity determines the biosynthesis of branched-chain and/or straight-chain of fatty acids. In Coxiella burnetii (strain RSA 331 / Henzerling II), this protein is Beta-ketoacyl-[acyl-carrier-protein] synthase III.